The sequence spans 583 residues: Moesin/ezrin/radixin homolog 1 (583 aa).

The FERM domain maps to 11-301; that stretch reads MNVRVTTMDA…GNHELYMRRR (291 aa). 2 disordered regions span residues 466–518 and 539–558; these read TTTP…RTLA and RDDT…VRQG. Over residues 476-485 the composition is skewed to acidic residues; it reads EEEEDNEEEL. The segment covering 496-518 has biased composition (basic and acidic residues); that stretch reads DYSKDFDTDEHIKDPVEERRTLA. The residue at position 564 (threonine 564) is a Phosphothreonine.

Interacts with cytoskeletal actin.

The protein resides in the cell junction. The protein localises to the adherens junction. It localises to the cell projection. Its subcellular location is the microvillus. It is found in the rhabdomere. The protein resides in the cell membrane. The protein localises to the cytoplasm. It localises to the cytoskeleton. Functionally, involved in connections of major cytoskeletal structures to the plasma membrane. In Aedes aegypti (Yellowfever mosquito), this protein is Moesin/ezrin/radixin homolog 1.